We begin with the raw amino-acid sequence, 529 residues long: MFS glucose transporter mfs1 (529 aa).

A run of 12 helical transmembrane segments spans residues 7-27 (VYFLCGFATLGGGLFGFDISS), 52-72 (SITCAMPFGSLVGALCSSFIA), 86-106 (ILWIIGSIFMCASNGIPLLVV), 109-129 (VIAGGCVGIASAMVPVYQAEI), 138-158 (VISLQQWAITWGILIQYFIQY), 179-199 (IPWGIQIVPGVILFFGMFLFP), 272-292 (LQMWSQLCGMNVMMYYIVYIM), 301-321 (LLTASIQYILNTALTLPAIIY), 330-350 (AILIGFFLQAIFLYLEGGLQG), 375-395 (AVGKAIIALSYLFVCSFATTI), 415-439 (AVSLATASNWIWNCLLALFVPPLLW), and 446-464 (YMIFAAFNTAAFIHMFLTA).

Belongs to the major facilitator superfamily. Sugar transporter (TC 2.A.1.1) family.

It localises to the membrane. In terms of biological role, probable MFS glucose transporter; part of the gene cluster 27 that mediates the biosynthesis of asparasone A, a sclerotium-specific anthraquinone pigment important for sclerotial survival. This Aspergillus flavus (strain ATCC 200026 / FGSC A1120 / IAM 13836 / NRRL 3357 / JCM 12722 / SRRC 167) protein is MFS glucose transporter mfs1.